Reading from the N-terminus, the 493-residue chain is Probable cytosol aminopeptidase (493 aa).

Positions 259 and 264 each coordinate Mn(2+). Residue lysine 271 is part of the active site. Positions 282, 341, and 343 each coordinate Mn(2+). The active site involves arginine 345.

Belongs to the peptidase M17 family. It depends on Mn(2+) as a cofactor.

It is found in the cytoplasm. It carries out the reaction Release of an N-terminal amino acid, Xaa-|-Yaa-, in which Xaa is preferably Leu, but may be other amino acids including Pro although not Arg or Lys, and Yaa may be Pro. Amino acid amides and methyl esters are also readily hydrolyzed, but rates on arylamides are exceedingly low.. The enzyme catalyses Release of an N-terminal amino acid, preferentially leucine, but not glutamic or aspartic acids.. Its function is as follows. Presumably involved in the processing and regular turnover of intracellular proteins. Catalyzes the removal of unsubstituted N-terminal amino acids from various peptides. The chain is Probable cytosol aminopeptidase from Bacillus cytotoxicus (strain DSM 22905 / CIP 110041 / 391-98 / NVH 391-98).